The primary structure comprises 648 residues: Biosynthetic arginine decarboxylase (648 aa).

Lysine 109 is subject to N6-(pyridoxal phosphate)lysine. 291–301 (LDVGGGLGVDY) is a substrate binding site.

Belongs to the Orn/Lys/Arg decarboxylase class-II family. SpeA subfamily. Mg(2+) is required as a cofactor. The cofactor is pyridoxal 5'-phosphate.

The catalysed reaction is L-arginine + H(+) = agmatine + CO2. Functionally, catalyzes the biosynthesis of agmatine from arginine. This is Biosynthetic arginine decarboxylase from Prochlorococcus marinus (strain SARG / CCMP1375 / SS120).